The chain runs to 29 residues: L-serine dehydratase, beta chain (29 aa).

Belongs to the iron-sulfur dependent L-serine dehydratase family. As to quaternary structure, heterodimer of an alpha chain and a beta chain. It depends on [4Fe-4S] cluster as a cofactor.

It carries out the reaction L-serine = pyruvate + NH4(+). Its pathway is carbohydrate biosynthesis; gluconeogenesis. In Anaerotignum propionicum (Clostridium propionicum), this protein is L-serine dehydratase, beta chain.